Reading from the N-terminus, the 418-residue chain is Protease LasA (418 aa).

A signal peptide spans 1 to 31 (MQHKRSRALASPRSPFLFALLALAVGGTANA). Positions 32–236 (HDDGLPAFRY…ARQLQAKAAL (205 aa)) are excised as a propeptide. The Zn(2+) site is built by His259 and Asp272. Cys301 and Cys347 form a disulfide bridge. Active-site proton donor/acceptor residues include His317 and His356. Residue His358 participates in Zn(2+) binding. Residues Cys391 and Cys406 are joined by a disulfide bond.

The protein belongs to the peptidase M23A family. Zn(2+) is required as a cofactor.

The protein resides in the secreted. Involved in proteolysis and elastolysis (degradation of the host protein elastin). Has staphylolytic activity (degrades pentaglycine cross-links in cell wall peptidoglycan), preferring Gly-Gly-|-X substrates where X is Ala or Gly. Enhances the elastolytic but not proteolytic activity of elastase (lasB) and elastolytic activity of other proteases. Degradation of elastin is likely to contribute to the pathogenicity of P.aeruginosa. The chain is Protease LasA (lasA) from Pseudomonas aeruginosa (strain UCBPP-PA14).